The primary structure comprises 172 residues: Ribosome maturation factor RimM (172 aa).

The PRC barrel domain occupies 99 to 171 (DDIPTWNYFI…LLTVEVPDGL (73 aa)).

It belongs to the RimM family. As to quaternary structure, binds ribosomal protein uS19.

It is found in the cytoplasm. An accessory protein needed during the final step in the assembly of 30S ribosomal subunit, possibly for assembly of the head region. Essential for efficient processing of 16S rRNA. May be needed both before and after RbfA during the maturation of 16S rRNA. It has affinity for free ribosomal 30S subunits but not for 70S ribosomes. This Phocaeicola vulgatus (strain ATCC 8482 / DSM 1447 / JCM 5826 / CCUG 4940 / NBRC 14291 / NCTC 11154) (Bacteroides vulgatus) protein is Ribosome maturation factor RimM.